The chain runs to 361 residues: tRNA N6-adenosine threonylcarbamoyltransferase (361 aa).

His110 and His114 together coordinate Fe cation. Substrate is bound by residues 132-136, Asp165, Gly178, Asp182, and Asn284; that span reads LVSGG. Asp312 contributes to the Fe cation binding site.

The protein belongs to the KAE1 / TsaD family. The cofactor is Fe(2+).

It is found in the cytoplasm. The catalysed reaction is L-threonylcarbamoyladenylate + adenosine(37) in tRNA = N(6)-L-threonylcarbamoyladenosine(37) in tRNA + AMP + H(+). In terms of biological role, required for the formation of a threonylcarbamoyl group on adenosine at position 37 (t(6)A37) in tRNAs that read codons beginning with adenine. Is involved in the transfer of the threonylcarbamoyl moiety of threonylcarbamoyl-AMP (TC-AMP) to the N6 group of A37, together with TsaE and TsaB. TsaD likely plays a direct catalytic role in this reaction. The sequence is that of tRNA N6-adenosine threonylcarbamoyltransferase from Desulfovibrio desulfuricans (strain ATCC 27774 / DSM 6949 / MB).